The sequence spans 498 residues: Resveratrol cleavage oxygenase 1 (498 aa).

Residues Tyr-105 and Lys-136 each coordinate piceatannol. Residues Tyr-105 and Lys-136 each contribute to the trans-resveratrol site. Fe cation contacts are provided by His-169, His-220, and His-285. Glu-355 contacts piceatannol. Position 355 (Glu-355) interacts with trans-resveratrol. Fe cation is bound at residue His-481.

This sequence belongs to the carotenoid oxygenase family. Requires Fe(2+) as cofactor.

The enzyme catalyses trans-resveratrol + O2 = 3,5-dihydroxybenzaldehyde + 4-hydroxybenzaldehyde. It catalyses the reaction piceatannol + O2 = 3,5-dihydroxybenzaldehyde + 3,4-dihydroxybenzaldehyde. Dioxygenase that cleaves the interphenyl C-alpha-C-beta double bond of resveratrol to yield 3,5-dihydroxybenzaldehyde and 4-hydroxybenzaldehyde. Also cleaves piceatannol, a compound that differs from resveratrol only in the occurrence of an additional hydroxyl group, which leads to the production of 3,4-dihydroxybenzaldehyde and 3,5-hydroxybenzaldehyde. The chain is Resveratrol cleavage oxygenase 1 from Aspergillus fumigatus (strain ATCC MYA-4609 / CBS 101355 / FGSC A1100 / Af293) (Neosartorya fumigata).